Reading from the N-terminus, the 472-residue chain is MELRLYDTATREKRPFVPLHRNNVRMYVCGPTVYDFAHIGNARPVIVFDVLFRLLRHLYGAEHVTYVRNITDVDDKINARAARDFPGLPLNEAIRNVTELTERQFHEDVDALGCLRPTIEPRATEHIAEMRDIIERLVAGGFAYVAEDHVLFSPAAMNAANKVLPRYGALANRSLDEMIAGARVDVAPYKKDATDFVLWKPSKPGEPSWPSPAGIAAEGRPGWHIECSAMSWKHLGETFDIHGGGIDLVFPHHENEVAQSCCAFHTARMANVWMHNGFLQVEGEKMSKSLGNFVTIREVLADWPGEVVRLNMLKTHYRSPIDWTLRGLEESAKAVDDWYRTAGDLREGRPADAVIEALRDDINTPLMVAVLHGLRNEAASGGVDDVARFVGSLRLLGFLAEDAAQWRARKQQASGVDAAKVEGLIAERTAARARKDFKESDRLRDELAAMGVVLKDGKGADGKPVTTWEMAR.

Residue cysteine 29 coordinates Zn(2+). The 'HIGH' region motif lies at proline 31–asparagine 41. Residues cysteine 227, histidine 252, and glutamate 256 each coordinate Zn(2+). Positions lysine 285 to serine 289 match the 'KMSKS' region motif. Lysine 288 contributes to the ATP binding site.

It belongs to the class-I aminoacyl-tRNA synthetase family. Monomer. The cofactor is Zn(2+).

Its subcellular location is the cytoplasm. The enzyme catalyses tRNA(Cys) + L-cysteine + ATP = L-cysteinyl-tRNA(Cys) + AMP + diphosphate. This chain is Cysteine--tRNA ligase, found in Bradyrhizobium sp. (strain BTAi1 / ATCC BAA-1182).